The following is a 383-amino-acid chain: MKIVALKEKVKNETRTAITPEVAGLLIKKGYAVTVEKDIGLYAGFLDEEYVAVGTKISSVPLEIISDADIILKVQPSSVTDKYSELEFAKQGAIVVGLLSPYLNHEYIKAAAKKNLTTFAMEFVPRITKAQNMDALSSQSNLVGYRAVIEASYHYTKAFPMMITAAGTISACKTLVLGVGVAGLQAIATAKRLGSIVAGYDVRIATKEQVESLGAKFVSPELQEDLEEESGYASESSADYKAKQEKFLAKIIKGYNIVITTAQIPGKKAPMLVTDKMIESMMYGSVIVDISTSTGGNVEGSEPDKIVTRHGVTIIGLLNLASKIASDSSKLYSKNLYNFLTYALQDGQFNMDDELVRDMLITKDGKIVNYIIREKYESITDNG.

Residues 131 to 134 (QNMD), Val-181, 201 to 203 (DVR), and Gly-231 contribute to the NAD(+) site.

Belongs to the AlaDH/PNT family. Heterotrimer of two alpha chains and a beta (PntB) chain; in Rickettsia, the alpha chain is made of two subunits (PntAA and PntAB) and forms a dimer.

The catalysed reaction is NAD(+) + NADPH + H(+)(in) = NADH + NADP(+) + H(+)(out). In terms of biological role, the transhydrogenation between NADH and NADP is coupled to respiration and ATP hydrolysis and functions as a proton pump across the membrane. The protein is NAD(P) transhydrogenase subunit alpha part 1 (pntAA) of Rickettsia prowazekii (strain Madrid E).